The primary structure comprises 748 residues: CCR4-NOT transcription complex subunit 10-A (748 aa).

Residues 1–17 show a composition bias toward basic and acidic residues; that stretch reads MAADKAGEQGAEKHEDS. Disordered stretches follow at residues 1–25, 184–205, 483–524, and 605–635; these read MAAD…GISD, SNNK…EPFA, KQEN…PPSS, and VSLG…QMPQ. A compositionally biased stretch (low complexity) spans 185-200; sequence NNKNGKNNETNSNANN. 2 stretches are compositionally biased toward polar residues: residues 487-509 and 605-615; these read GSKT…VCSN and VSLGVSSNEQE.

Belongs to the CNOT10 family. In terms of assembly, component of the CCR4-NOT complex. cnot10 and cnot11 form a subcomplex docked to the cnot1 scaffold.

It is found in the cytoplasm. The protein resides in the nucleus. In terms of biological role, component of the CCR4-NOT complex which is one of the major cellular mRNA deadenylases and is linked to various cellular processes including bulk mRNA degradation, miRNA-mediated repression, translational repression during translational initiation and general transcription regulation. Additional complex functions may be a consequence of its influence on mRNA expression. Is not required for association of CNOT7 to the CCR4-NOT complex. This Xenopus laevis (African clawed frog) protein is CCR4-NOT transcription complex subunit 10-A (cnot10-a).